The following is a 306-amino-acid chain: Immune protein Tsi7 (306 aa).

Interacts with Tse7.

Its function is as follows. Immunity protein that plays a role in preventing early activation of toxin Tse7. Protects thereby cells from Tse7 DNase activity. The protein is Immune protein Tsi7 of Pseudomonas aeruginosa (strain ATCC 15692 / DSM 22644 / CIP 104116 / JCM 14847 / LMG 12228 / 1C / PRS 101 / PAO1).